Reading from the N-terminus, the 1491-residue chain is Pleckstrin homology domain-containing family H member 2 (1491 aa).

A coiled-coil region spans residues 19–177; it reads ALEAQLMKFR…ELQEKKISCV (159 aa). Disordered stretches follow at residues 232–435, 506–546, and 612–668; these read AEKP…PFQP, DDGL…LHRF, and SSSP…SDYA. The segment covering 253 to 264 has biased composition (polar residues); it reads TSCSSEQNQKTR. Residues 374–385 are compositionally biased toward basic and acidic residues; sequence KEQDSSSDELNK. Over residues 392–406 the composition is skewed to polar residues; the sequence is LDYTSSSSEANTPSP. Over residues 657–666 the composition is skewed to low complexity; it reads SDSSAASESD. PH domains follow at residues 702–796 and 810–918; these read PLEK…SVLR and KPAV…VAAG. In terms of domain architecture, MyTH4 spans 954 to 1109; the sequence is HSKEGILSPL…PSRMEILSTL (156 aa). The 330-residue stretch at 1120–1449 folds into the FERM domain; the sequence is FSIPVHFMNG…SYINSFHQQK (330 aa). The tract at residues 1466–1491 is disordered; that stretch reads QAPQARVMGSQPPLSNSRPTKGPTLL.

Self-associates. Interacts with TGFB1I1. In terms of tissue distribution, expressed in the kidney and testis. Expressed in the kidney exclusively by glomerular podocytes.

It localises to the cytoplasm. The protein resides in the cytoskeleton. Its subcellular location is the cell membrane. It is found in the cell projection. The protein localises to the lamellipodium. In terms of biological role, in the kidney glomerulus may play a role in linking podocyte foot processes to the glomerular basement membrane. May be involved in stabilization of F-actin by attenuating its depolymerization. Can recruit TGFB1I1 from focal adhesions to podocyte lamellipodia. This is Pleckstrin homology domain-containing family H member 2 (Plekhh2) from Mus musculus (Mouse).